The chain runs to 171 residues: MPLLDSFTVDHTRMEAPAVRVAKTMNTPHGDTITVFDLRFCVPNKEVMPEKGIHTLEHLFAGFMRDHLNGNGVEIIDISPMGCRTGFYMSLIGQPDEQRVADAWKAAMQDVLKVKAQNQIPELNVYQCGTYEMHSLEEAQEIARHIIERGVGVNSNDALALPKEKLQELHL.

Fe cation is bound by residues His-54, His-58, and Cys-128.

It belongs to the LuxS family. As to quaternary structure, homodimer. The cofactor is Fe cation.

It catalyses the reaction S-(5-deoxy-D-ribos-5-yl)-L-homocysteine = (S)-4,5-dihydroxypentane-2,3-dione + L-homocysteine. Its function is as follows. Involved in the synthesis of autoinducer 2 (AI-2) which is secreted by bacteria and is used to communicate both the cell density and the metabolic potential of the environment. The regulation of gene expression in response to changes in cell density is called quorum sensing. Catalyzes the transformation of S-ribosylhomocysteine (RHC) to homocysteine (HC) and 4,5-dihydroxy-2,3-pentadione (DPD). The sequence is that of S-ribosylhomocysteine lyase from Cronobacter sakazakii (strain ATCC BAA-894) (Enterobacter sakazakii).